Reading from the N-terminus, the 852-residue chain is Leucine--tRNA ligase (852 aa).

Residues 42-52 carry the 'HIGH' region motif; it reads PYPSGKLHMGH. The interval 586–606 is disordered; it reads NKYVPADQVDPNDPKDPETGE. A 'KMSKS' region motif is present at residues 614-618; sequence KMSKS. Position 617 (Lys617) interacts with ATP.

It belongs to the class-I aminoacyl-tRNA synthetase family.

It is found in the cytoplasm. The enzyme catalyses tRNA(Leu) + L-leucine + ATP = L-leucyl-tRNA(Leu) + AMP + diphosphate. The chain is Leucine--tRNA ligase from Picosynechococcus sp. (strain ATCC 27264 / PCC 7002 / PR-6) (Agmenellum quadruplicatum).